An 84-amino-acid chain; its full sequence is Putative membrane protein insertion efficiency factor (84 aa).

Residues 61 to 84 are disordered; sequence SQGFEDPLPPNTKRTNLTHGRQTK. Residues 72-84 are compositionally biased toward polar residues; it reads TKRTNLTHGRQTK.

It belongs to the UPF0161 family.

It localises to the cell inner membrane. Could be involved in insertion of integral membrane proteins into the membrane. In Leptospira borgpetersenii serovar Hardjo-bovis (strain JB197), this protein is Putative membrane protein insertion efficiency factor.